The chain runs to 385 residues: MSAANDKLPDILQDAVLKASVPVPDDFVQVKGIDYSAATATDMRASDLVNSMKTMGFQASSLGKACDIIDEMRSWRGKHIDELDEHDRKGQFDDAGYQKTTVFMGYTSNLISSGLRETLRYLVQHKMVDALVATAGGIEEDIIKCLAPTYLGEFSLEGKSLRDQGMNRIGNLLVPNDNYCKFEEWIVPIFDKMLEEQEEYVAKHGKDCLDANTDVDSPIWTPSKLIDRLGKEINDESSVLYWAHKNKIPIFCPAITDGSIGDMLFFHTFKASPKQIRLDIVADIRKINSMSMEASKAGMIILGGGLIKHHIANACLMRNGADYAVYINTGQEFDGSDAGARPDEAVSWGKIKAEAKSVKIYADVTIVFPLIVAATFANGKPLPKN.

NAD(+) is bound by residues 108 to 112 (SNLIS), 134 to 136 (TAG), E140, and D257. Residue 139-140 (EE) participates in spermidine binding. Spermidine is bound at residue D262. Residue G304 coordinates NAD(+). H309 is a spermidine binding site. NAD(+) is bound at residue 329-330 (TG). Spermidine is bound by residues 335–337 (GSD) and 344–350 (EAVSWGK). K350 serves as the catalytic Nucleophile. 363 to 364 (DV) is a binding site for NAD(+).

The protein belongs to the deoxyhypusine synthase family. It depends on NAD(+) as a cofactor.

It carries out the reaction [eIF5A protein]-L-lysine + spermidine = [eIF5A protein]-deoxyhypusine + propane-1,3-diamine. It functions in the pathway protein modification; eIF5A hypusination. Functionally, catalyzes the NAD-dependent oxidative cleavage of spermidine and the subsequent transfer of the butylamine moiety of spermidine to the epsilon-amino group of a specific lysine residue of the eIF-5A precursor protein to form the intermediate deoxyhypusine residue. This is Deoxyhypusine synthase (DYS1) from Candida glabrata (strain ATCC 2001 / BCRC 20586 / JCM 3761 / NBRC 0622 / NRRL Y-65 / CBS 138) (Yeast).